The following is a 169-amino-acid chain: Ribosome maturation factor RimM (169 aa).

In terms of domain architecture, PRC barrel spans 94 to 167; it reads ENEFYFHEII…KITIEVMEGL (74 aa).

This sequence belongs to the RimM family. As to quaternary structure, binds ribosomal protein uS19.

It is found in the cytoplasm. In terms of biological role, an accessory protein needed during the final step in the assembly of 30S ribosomal subunit, possibly for assembly of the head region. Essential for efficient processing of 16S rRNA. May be needed both before and after RbfA during the maturation of 16S rRNA. It has affinity for free ribosomal 30S subunits but not for 70S ribosomes. The sequence is that of Ribosome maturation factor RimM from Listeria welshimeri serovar 6b (strain ATCC 35897 / DSM 20650 / CCUG 15529 / CIP 8149 / NCTC 11857 / SLCC 5334 / V8).